The chain runs to 1360 residues: Spike glycoprotein (1360 aa).

The N-terminal stretch at 1–13 (MLFVFLTLLPSCL) is a signal peptide. Residues 14 to 1301 (GYIGDFRCIN…GTYEMYVKWP (1288 aa)) lie on the Extracellular side of the membrane. Residues 15–296 (YIGDFRCINL…SYTSEIKCKT (282 aa)) enclose the BetaCoV S1-NTD domain. Intrachain disulfides connect Cys21/Cys158, Cys153/Cys187, Cys165/Cys246, Cys284/Cys294, and Cys329/Cys354. N-linked (GlcNAc...) asparagine; by host glycans are attached at residues Asn60 and Asn134. Asn192 carries an N-linked (GlcNAc...) asparagine; by host glycan. One can recognise a BetaCoV S1-CTD domain in the interval 327–605 (PDCKIEEWLA…GINSGTTCST (279 aa)). A glycan (N-linked (GlcNAc...) asparagine; by host) is linked at Asn357. 2 disulfides stabilise this stretch: Cys372–Cys425 and Cys384–Cys603. N-linked (GlcNAc...) asparagine; by host glycans are attached at residues Asn435, Asn566, Asn664, Asn704, Asn727, Asn747, Asn776, and Asn793. Fusion peptide regions lie at residues 906-927 (SAIE…VESY) and 925-945 (ESYN…VQSF). N-linked (GlcNAc...) asparagine; by host glycosylation occurs at Asn929. A disulfide bridge connects residues Cys930 and Cys941. The segment at 1006–1056 (QKMIASSFNNAIGAIQEGFDATNSALAKIQSVVNANAEALNNLLNQLSNRF) is heptad repeat 1. The stretch at 1035-1079 (QSVVNANAEALNNLLNQLSNRFGAISASLQEILSRLDALEAQAQI) forms a coiled coil. 5 N-linked (GlcNAc...) asparagine; by host glycosylation sites follow: Asn1216, Asn1226, Asn1245, Asn1261, and Asn1282. The interval 1250–1290 (VPDLSFDIGKLNVTFLDLSYEMNRIQDAIKNLNESYINLKE) is heptad repeat 2. Residues 1263–1291 (TFLDLSYEMNRIQDAIKNLNESYINLKEI) adopt a coiled-coil conformation. Residues 1302-1322 (WYVWLLIGLAGVAVCVLLFFI) traverse the membrane as a helical segment. The Cytoplasmic segment spans residues 1323-1360 (CCCTGCGSCCFKKCGNCCDEYGGRQAGIVIHNISSHED). The KxHxx signature appears at 1356–1360 (SSHED).

The protein belongs to the betacoronaviruses spike protein family. Homotrimer; each monomer consists of a S1 and a S2 subunit. The resulting peplomers protrude from the virus surface as spikes. In terms of processing, specific enzymatic cleavages in vivo yield mature proteins. The precursor is processed into S1 and S2 by host cell furin or another cellular protease to yield the mature S1 and S2 proteins. Additionally, a second cleavage leads to the release of a fusion peptide after viral attachment to host cell receptor. The cytoplasmic Cys-rich domain is palmitoylated. Spike glycoprotein is digested within host endosomes.

The protein resides in the virion membrane. It localises to the host endoplasmic reticulum-Golgi intermediate compartment membrane. Its subcellular location is the host cell membrane. Functionally, attaches the virion to the cell membrane by interacting with host receptor, initiating the infection. In terms of biological role, mediates fusion of the virion and cellular membranes by acting as a class I viral fusion protein. Under the current model, the protein has at least three conformational states: pre-fusion native state, pre-hairpin intermediate state, and post-fusion hairpin state. During viral and target cell membrane fusion, the coiled coil regions (heptad repeats) assume a trimer-of-hairpins structure, positioning the fusion peptide in close proximity to the C-terminal region of the ectodomain. The formation of this structure appears to drive apposition and subsequent fusion of viral and target cell membranes. Its function is as follows. Acts as a viral fusion peptide which is unmasked following S2 cleavage occurring upon virus endocytosis. The polypeptide is Spike glycoprotein (Rat coronavirus (strain 681) (RCV-SDAV)).